A 707-amino-acid chain; its full sequence is Polyribonucleotide nucleotidyltransferase (707 aa).

Positions 488 and 494 each coordinate Mg(2+). The KH domain maps to 555–614 (PRLYVMKINPEKIRDVIGKGGAVIRALTEETGTQINIEEDGTITIASNDSAKADEAKRRI). The region spanning 624–692 (GKVYEGAITK…EKGRVKLSMK (69 aa)) is the S1 motif domain.

Belongs to the polyribonucleotide nucleotidyltransferase family. Mg(2+) is required as a cofactor.

Its subcellular location is the cytoplasm. It carries out the reaction RNA(n+1) + phosphate = RNA(n) + a ribonucleoside 5'-diphosphate. Its function is as follows. Involved in mRNA degradation. Catalyzes the phosphorolysis of single-stranded polyribonucleotides processively in the 3'- to 5'-direction. The polypeptide is Polyribonucleotide nucleotidyltransferase (Polaromonas sp. (strain JS666 / ATCC BAA-500)).